The following is a 385-amino-acid chain: ELAV-like protein 4 (385 aa).

The segment at 12 to 48 is disordered; the sequence is TMEPQVSNGPTSNTSNGPSSNNRNCPSPMQTGAATDD. Residues 18-33 show a composition bias toward low complexity; sequence SNGPTSNTSNGPSSNN. Polar residues predominate over residues 34–44; it reads RNCPSPMQTGA. Position 38 is a phosphoserine (S38). RRM domains follow at residues 51-129 and 137-217; these read TNLI…YARP and ANLY…FANN. At S233 the chain carries Phosphoserine. R248 carries the asymmetric dimethylarginine; by CARM1; alternate modification. Omega-N-methylarginine; by CARM1; alternate is present on R248. Positions 302-380 constitute an RRM 3 domain; sequence WCIFVYNLSP…RVLQVSFKTN (79 aa).

It belongs to the RRM elav family. As to quaternary structure, component of a TAU mRNP complex, at least composed of IGF2BP1, ELAVL4 and G3BP. Associates with the EIF4F cap-binding complex, composed of EIF4G, EIF4A, EIF4E and PABP. Within the EIF4F cap-binding complex, interacts with EIF4A. Interacts with SMN (via Tudor domain) in an RNA-independent manner; the interaction is required for localization of ELAVL4 to RNA granules. Interacts with MAP1 light chain LC1 (via C-terminus); the interaction contributes to the association of ELAVL4 with microtubules. Interacts with MAP1 light chain LC2. Methylated by CARM1, which leads to reduced RNA-binding activity and enhanced interaction with SMN. Methylation at Arg-248 by CARM1 weakens protective binding to the 3'UTR of CDKN1A mRNA and down-regulates CDKN1A protein expression, thereby maintaining cells in a proliferative state. Methylation is inhibited by NGF, which facilitates neurite outgrowth. Expressed in the brain, including the hippocampus, and in pancreatic beta cells (at protein level). Expressed in pyramidal neurons of the hippocampal CA3 and CA1 region and in the hilus but not in dentate granule cells (at protein level). Expressed in the dorsal root ganglion and the spinal cord (at protein level). Expressed in neural stem and progenitor cells (at protein level). Expressed in radial glia-like cells and in transient amplifying cells in the subventricular zone (SVZ), and in immature neurons both in the SVZ and the rostral migratory stream as well as in mature neurons in the olfactory bulb (at protein level). Expressed in testis and in the brain, including the hippocampus, the neocortex and the cerebellum. Expressed in lower- but not upper-layer primary neurons of the mature neocortex, in the hippocampal regions CA1-3 and the dentate gyrus. Expressed in the mitral and granule cells of the olfactory bulb, cerebral cortex, entorhinal cortex, thalamus, medial habenula, amygdala, granule cells of the cerebellum, pons, olivary nucleus, dorsal and ventral spinal cord and in dorsal root ganglia. Expressed in motor neurons. Isoform 4: Expressed in the brain. Isoform 5: Expressed in the brain. Isoform 6: Expressed in the brain. Isoform 7: Expressed in the brain. Isoform 8: Expressed in the brain. Isoform 9: Expressed in the brain. Isoform 10: Expressed in the brain. Isoform 11: Expressed in the brain.

The protein localises to the cytoplasm. The protein resides in the perikaryon. Its subcellular location is the cell projection. It localises to the dendrite. It is found in the axon. The protein localises to the growth cone. RNA-binding protein that is involved in the post-transcriptional regulation of mRNAs. Plays a role in the regulation of mRNA stability, alternative splicing and translation. Binds to AU-rich element (ARE) sequences in the 3' untranslated region (3'UTR) of target mRNAs, including GAP43, VEGF, FOS, CDKN1A and ACHE mRNA. Many of the target mRNAs are coding for RNA-binding proteins, transcription factors and proteins involved in RNA processing and/or neuronal development and function. By binding to the mRNA 3'UTR, decreases mRNA deadenylation and thereby contributes to the stabilization of mRNA molecules and their protection from decay. Also binds to the polyadenylated (poly(A)) tail in the 3'UTR of mRNA, thereby increasing its affinity for mRNA binding. Mainly plays a role in neuron-specific RNA processing by stabilization of mRNAs such as GAP43, ACHE and mRNAs of other neuronal proteins, thereby contributing to the differentiation of neural progenitor cells, nervous system development, learning and memory mechanisms. Involved in the negative regulation of the proliferative activity of neuronal stem cells and in the positive regulation of neuronal differentiation of neural progenitor cells. Promotes neuronal differentiation of neural stem/progenitor cells in the adult subventricular zone of the hippocampus by binding to and stabilizing SATB1 mRNA. Binds and stabilizes MSI1 mRNA in neural stem cells. Exhibits increased binding to ACHE mRNA during neuronal differentiation, thereby stabilizing ACHE mRNA and enhancing its expression. Protects CDKN1A mRNA from decay by binding to its 3'-UTR. May bind to APP and BACE1 mRNAS and the BACE1AS lncRNA and enhance their stabilization. Plays a role in neurite outgrowth and in the establishment and maturation of dendritic arbors, thereby contributing to neocortical and hippocampal circuitry function. Stabilizes GAP43 mRNA and protects it from decay during postembryonic development in the brain. By promoting the stabilization of GAP43 mRNA, plays a role in NGF-mediated neurite outgrowth. Binds to BDNF long 3'UTR mRNA, thereby leading to its stabilization and increased dendritic translation after activation of PKC. By increasing translation of BDNF after nerve injury, may contribute to nerve regeneration. Acts as a stabilizing factor by binding to the 3'UTR of NOVA1 mRNA, thereby increasing its translation and enhancing its functional activity in neuron-specific splicing. Stimulates translation of mRNA in a poly(A)- and cap-dependent manner, possibly by associating with the EIF4F cap-binding complex. May also negatively regulate translation by binding to the 5'UTR of Ins2 mRNA, thereby repressing its translation. Upon glucose stimulation, Ins2 mRNA is released from ELAVL4 and translational inhibition is abolished. Also plays a role in the regulation of alternative splicing. May regulate alternative splicing of CALCA pre-mRNA into Calcitonin and Calcitonin gene-related peptide 1 (CGRP) by competing with splicing regulator TIAR for binding to U-rich sequences of CALCA pre-mRNA. The chain is ELAV-like protein 4 (Elavl4) from Mus musculus (Mouse).